Consider the following 260-residue polypeptide: Thiazole synthase (260 aa).

Lysine 102 functions as the Schiff-base intermediate with DXP in the catalytic mechanism. 1-deoxy-D-xylulose 5-phosphate-binding positions include glycine 163, 189–190 (AG), and 211–212 (NT).

The protein belongs to the ThiG family. In terms of assembly, homotetramer. Forms heterodimers with either ThiH or ThiS.

It localises to the cytoplasm. It carries out the reaction [ThiS sulfur-carrier protein]-C-terminal-Gly-aminoethanethioate + 2-iminoacetate + 1-deoxy-D-xylulose 5-phosphate = [ThiS sulfur-carrier protein]-C-terminal Gly-Gly + 2-[(2R,5Z)-2-carboxy-4-methylthiazol-5(2H)-ylidene]ethyl phosphate + 2 H2O + H(+). It functions in the pathway cofactor biosynthesis; thiamine diphosphate biosynthesis. Its function is as follows. Catalyzes the rearrangement of 1-deoxy-D-xylulose 5-phosphate (DXP) to produce the thiazole phosphate moiety of thiamine. Sulfur is provided by the thiocarboxylate moiety of the carrier protein ThiS. In vitro, sulfur can be provided by H(2)S. This chain is Thiazole synthase, found in Geobacter sp. (strain M21).